The following is a 289-amino-acid chain: Rhodopsin (289 aa).

The Extracellular segment spans residues 1 to 7 (YLVNPAA). Residues 8 to 32 (YAALGAYMFLLILIGFPVNFLTLYV) traverse the membrane as a helical segment. Residues 33–44 (TIEHKKLRTPLN) lie on the Cytoplasmic side of the membrane. Residues 45–67 (YILLNLAVANLFMVLGGFTTTMY) traverse the membrane as a helical segment. At 68–81 (TSMHGYFVLGRLGC) the chain is on the extracellular side. The cysteines at positions 81 and 158 are disulfide-linked. Residues 82–104 (NLEGFFATMGGEIALWSLVVLAI) form a helical membrane-spanning segment. The short motif at 105–107 (ERW) is the 'Ionic lock' involved in activated form stabilization element. Over 105 to 123 (ERWIVVCKPISNFRFTEDH) the chain is Cytoplasmic. Residues 124–144 (AIMGLAFTWVMALSCAVPPLV) traverse the membrane as a helical segment. Topologically, residues 145-173 (GWSRYIPEGMQCSCGVDYYTRAEGFNNES) are extracellular. N-linked (GlcNAc...) asparagine glycosylation is present at Asn-171. Residues 174-195 (FVIYMFIVHFLTPLIIISFCYG) form a helical membrane-spanning segment. The Cytoplasmic portion of the chain corresponds to 196–223 (RLLCAVKEAAAAQQESETTQRAEREVSR). Residues 224 to 245 (MVVMMVISFLMCWLPYASVAWY) traverse the membrane as a helical segment. Topologically, residues 246 to 257 (IFCNQGSEFGPI) are extracellular. The chain crosses the membrane as a helical span at residues 258–279 (FMTLPAFFAKSSAIYNPLIYIC). N6-(retinylidene)lysine is present on Lys-267. Topologically, residues 280-289 (MNKQFRHCMI) are cytoplasmic.

This sequence belongs to the G-protein coupled receptor 1 family. Opsin subfamily. In terms of processing, phosphorylated on some or all of the serine and threonine residues present in the C-terminal region. Contains one covalently linked retinal chromophore.

The protein resides in the membrane. It localises to the cell projection. The protein localises to the cilium. It is found in the photoreceptor outer segment. In terms of biological role, photoreceptor required for image-forming vision at low light intensity. While most salt water fish species use retinal as chromophore, most freshwater fish use 3-dehydroretinal, or a mixture of retinal and 3-dehydroretinal. Light-induced isomerization of 11-cis to all-trans retinal triggers a conformational change that activates signaling via G-proteins. Subsequent receptor phosphorylation mediates displacement of the bound G-protein alpha subunit by arrestin and terminates signaling. The chain is Rhodopsin (rho) from Cottocomephorus inermis (Longfin Baikal sculpin).